A 189-amino-acid chain; its full sequence is Protein GrpE (189 aa).

Polar residues predominate over residues 1 to 10 (MADEQQQTLD). The tract at residues 1 to 21 (MADEQQQTLDPQAPEQTDAPE) is disordered.

The protein belongs to the GrpE family. As to quaternary structure, homodimer.

Its subcellular location is the cytoplasm. In terms of biological role, participates actively in the response to hyperosmotic and heat shock by preventing the aggregation of stress-denatured proteins, in association with DnaK and GrpE. It is the nucleotide exchange factor for DnaK and may function as a thermosensor. Unfolded proteins bind initially to DnaJ; upon interaction with the DnaJ-bound protein, DnaK hydrolyzes its bound ATP, resulting in the formation of a stable complex. GrpE releases ADP from DnaK; ATP binding to DnaK triggers the release of the substrate protein, thus completing the reaction cycle. Several rounds of ATP-dependent interactions between DnaJ, DnaK and GrpE are required for fully efficient folding. In Pseudomonas paraeruginosa (strain DSM 24068 / PA7) (Pseudomonas aeruginosa (strain PA7)), this protein is Protein GrpE.